Reading from the N-terminus, the 604-residue chain is Prostaglandin G/H synthase 2 (604 aa).

Residues 1 to 17 form the signal peptide; it reads MLARALLLCVALALGHA. In terms of domain architecture, EGF-like spans 18–55; that stretch reads ANPCCSNPCQNRGVCMSVGFDQYQCDCTRTGFYGENCS. Disulfide bonds link cysteine 21–cysteine 32, cysteine 22–cysteine 145, cysteine 26–cysteine 42, and cysteine 44–cysteine 54. Asparagine 53 carries an N-linked (GlcNAc...) asparagine glycan. Arginine 106 contributes to the substrate binding site. N-linked (GlcNAc...) asparagine glycosylation is present at asparagine 130. Histidine 193 (proton acceptor) is an active-site residue. Tyrosine 341 serves as a coordination point for substrate. The For cyclooxygenase activity role is filled by tyrosine 371. Residue histidine 374 coordinates heme b. Asparagine 396 is a glycosylation site (N-linked (GlcNAc...) asparagine). Position 526 is an S-nitrosocysteine (cysteine 526). The cysteines at positions 555 and 561 are disulfide-linked. The N-linked (GlcNAc...) asparagine glycan is linked to asparagine 580.

It belongs to the prostaglandin G/H synthase family. In terms of assembly, homodimer. Heme b serves as cofactor. Post-translationally, S-nitrosylation by NOS2 (iNOS) activates enzyme activity. S-nitrosylation may take place on different Cys residues in addition to Cys-526.

It localises to the microsome membrane. The protein resides in the endoplasmic reticulum membrane. It is found in the nucleus inner membrane. Its subcellular location is the nucleus outer membrane. It carries out the reaction (5Z,8Z,11Z,14Z)-eicosatetraenoate + AH2 + 2 O2 = prostaglandin H2 + A + H2O. It catalyses the reaction (5Z,8Z,11Z,14Z)-eicosatetraenoate + 2 O2 = prostaglandin G2. The enzyme catalyses prostaglandin G2 + AH2 = prostaglandin H2 + A + H2O. The catalysed reaction is (5Z,8Z,11Z,14Z,17Z)-eicosapentaenoate + 2 O2 = prostaglandin G3. It carries out the reaction prostaglandin G3 + AH2 = prostaglandin H3 + A + H2O. It catalyses the reaction (8Z,11Z,14Z)-eicosatrienoate + 2 O2 = prostaglandin G1. The enzyme catalyses prostaglandin G1 + AH2 = prostaglandin H1 + A + H2O. The catalysed reaction is 2-(5Z,8Z,11Z,14Z)-eicosatetraenoyl-sn-glycero-3-phosphoethanolamine + 2 O2 = 2-(prostaglandin G2)-sn-glycero-3-phosphoethanolamine. It carries out the reaction 2-(prostaglandin G2)-sn-glycero-3-phosphoethanolamine + AH2 = 2-(prostaglandin H2)-sn-glycero-3-phosphoethanolamine + A + H2O. It catalyses the reaction 2-(5Z,8Z,11Z,14Z)-eicosatetraenoyl-sn-glycero-3-phosphocholine + 2 O2 = 2-(prostaglandin G2)-sn-glycero-3-phosphocholine. The enzyme catalyses 2-(prostaglandin G2)-sn-glycero-3-phosphocholine + AH2 = 2-(prostaglandin H2)-sn-glycero-3-phosphocholine + A + H2O. The catalysed reaction is (15S)-hydroperoxy-(5Z,8Z,11Z,13E)-eicosatetraenoate + AH2 = (15S)-hydroxy-(5Z,8Z,11Z,13E)-eicosatetraenoate + A + H2O. It carries out the reaction 2-(5Z,8Z,11Z,14Z)-eicosatetraenoyl-sn-glycero-3-phosphocholine + AH2 + O2 = 2-[(15S)-hydroxy-(5Z,8Z,11Z,13E)-eicosatetraenoyl]-sn-glycero-3-phosphocholine + A + H2O. It catalyses the reaction 2-(5Z,8Z,11Z,14Z)-eicosatetraenoyl-sn-glycero-3-phosphocholine + AH2 + O2 = 2-[(15R)-hydroxy-(5Z,8Z,11Z,13E)-eicosatetraenoyl]-sn-glycero-3-phosphocholine + A + H2O. The enzyme catalyses 2-(5Z,8Z,11Z,14Z)-eicosatetraenoyl-sn-glycero-3-phosphocholine + AH2 + O2 = 2-[(11R)-hydroxy-(5Z,8Z,12E,14Z)-eicosatetraenoyl]-sn-glycero-3-phosphocholine + A + H2O. The catalysed reaction is (9Z,12Z)-octadecadienoate + AH2 + O2 = 9-hydroxy-(10E,12Z)-octadecadienoate + A + H2O. It carries out the reaction (9Z,12Z)-octadecadienoate + AH2 + O2 = 13-hydroxy-(9Z,11E)-octadecadienoate + A + H2O. It catalyses the reaction (5Z,8Z,11Z,14Z)-eicosatetraenoate + AH2 + O2 = (15R)-hydroxy-(5Z,8Z,11Z,13E)-eicosatetraenoate + A + H2O. The enzyme catalyses (5Z,8Z,11Z,14Z)-eicosatetraenoate + AH2 + O2 = (11R)-hydroxy-(5Z,8Z,12E,14Z)-eicosatetraenoate + A + H2O. The catalysed reaction is (5Z,8Z,11Z,14Z,17Z)-eicosapentaenoate + AH2 + O2 = (11R)-hydroxy-(5Z,8Z,12E,14Z,17Z)-eicosapentaenoate + A + H2O. It carries out the reaction (5Z,8Z,11Z,14Z,17Z)-eicosapentaenoate + AH2 + O2 = (18S)-hydroxy-(5Z,8Z,11Z,14Z,16E)-eicosapentaenoate + A + H2O. It catalyses the reaction (5Z,8Z,11Z,14Z,17Z)-eicosapentaenoate + AH2 + O2 = (18R)-hydroxy-(5Z,8Z,11Z,14Z,16E)-eicosapentaenoate + A + H2O. The enzyme catalyses (5Z,8Z,11Z,14Z,17Z)-eicosapentaenoate + AH2 + O2 = (15R)-hydroxy-(5Z,8Z,11Z,13E,17Z)-eicosapentaenoate + A + H2O. The catalysed reaction is (5Z,8Z,11Z,14Z,17Z)-eicosapentaenoate + AH2 + O2 = (15S)-hydroxy-(5Z,8Z,11Z,13E,17Z)-eicosapentaenoate + A + H2O. It carries out the reaction (7Z,10Z,13Z,16Z,19Z)-docosapentaenoate + AH2 + O2 = 13R-hydroxy-(7Z,10Z,14E,16Z,19Z)-docosapentaenoate + A + H2O. It catalyses the reaction (4Z,7Z,10Z,13Z,16Z,19Z)-docosahexaenoate + AH2 + O2 = 13-hydroxy-(4Z,7Z,10Z,14E,16Z,19Z)-docosahexaenoate + A + H2O. The enzyme catalyses (5S)-hydroxy-(6E,8Z,11Z,14Z)-eicosatetraenoate + AH2 + O2 = (5S,15R)-dihydroxy-(6E,8Z,11Z,13E)-eicosatetraenoate + A + H2O. The catalysed reaction is (4Z,7Z,10Z,13Z,16Z,19Z)-docosahexaenoate + AH2 + O2 = 17R-hydroxy-(4Z,7Z,10Z,13Z,15E,19Z)-docosahexaenoate + A + H2O. It carries out the reaction (5S)-hydroxy-(6E,8Z,11Z,14Z)-eicosatetraenoate + AH2 + O2 = (5S,15S)-dihydroxy-(6E,8Z,11Z,13E)-eicosatetraenoate + A + H2O. It catalyses the reaction (5S)-hydroxy-(6E,8Z,11Z,14Z)-eicosatetraenoate + AH2 + O2 = (5S,11R)-dihydroxy-(6E,8Z,12E,14Z)-eicosatetraenoate + A + H2O. The enzyme catalyses 2-(5Z,8Z,11Z,14Z-eicosatetraenoyl)-glycerol + 2 O2 = 2-glyceryl-prostaglandin G2. The catalysed reaction is 2-glyceryl-prostaglandin G2 + AH2 = 2-glyceryl-prostaglandin H2 + A + H2O. It carries out the reaction (5Z,8Z,11Z,14Z)-eicosatetraenoate + O2 = (15R)-hydroperoxy-(5Z,8Z,11Z,13E)-eicosatetraenoate. It catalyses the reaction (5Z,8Z,11Z,14Z)-eicosatetraenoate + O2 = 11R-hydroperoxy-(5Z,8Z,12E,14Z)-eicosatetraenoate. The enzyme catalyses (9Z,12Z)-octadecadienoate + AH2 + O2 = (9R)-hydroxy-(10E,12Z)-octadecadienoate + A + H2O. The catalysed reaction is (9Z,12Z)-octadecadienoate + AH2 + O2 = (9S)-hydroxy-(10E,12Z)-octadecadienoate + A + H2O. It carries out the reaction (9Z,12Z)-octadecadienoate + AH2 + O2 = (13S)-hydroxy-(9Z,11E)-octadecadienoate + A + H2O. It catalyses the reaction (9Z,12Z)-octadecadienoate + AH2 + O2 = (13R)-hydroxy-(9Z,11E)-octadecadienoate + A + H2O. It functions in the pathway lipid metabolism; prostaglandin biosynthesis. In terms of biological role, dual cyclooxygenase and peroxidase in the biosynthesis pathway of prostanoids, a class of C20 oxylipins mainly derived from arachidonate ((5Z,8Z,11Z,14Z)-eicosatetraenoate, AA, C20:4(n-6)), with a particular role in the inflammatory response. The cyclooxygenase activity oxygenates AA to the hydroperoxy endoperoxide prostaglandin G2 (PGG2), and the peroxidase activity reduces PGG2 to the hydroxy endoperoxide prostaglandin H2 (PGH2), the precursor of all 2-series prostaglandins and thromboxanes. This complex transformation is initiated by abstraction of hydrogen at carbon 13 (with S-stereochemistry), followed by insertion of molecular O2 to form the endoperoxide bridge between carbon 9 and 11 that defines prostaglandins. The insertion of a second molecule of O2 (bis-oxygenase activity) yields a hydroperoxy group in PGG2 that is then reduced to PGH2 by two electrons. Similarly catalyzes successive cyclooxygenation and peroxidation of dihomo-gamma-linoleate (DGLA, C20:3(n-6)) and eicosapentaenoate (EPA, C20:5(n-3)) to corresponding PGH1 and PGH3, the precursors of 1- and 3-series prostaglandins. In an alternative pathway of prostanoid biosynthesis, converts 2-arachidonoyl lysophopholipids to prostanoid lysophopholipids, which are then hydrolyzed by intracellular phospholipases to release free prostanoids. Metabolizes 2-arachidonoyl glycerol yielding the glyceryl ester of PGH2, a process that can contribute to pain response. Generates lipid mediators from n-3 and n-6 polyunsaturated fatty acids (PUFAs) via a lipoxygenase-type mechanism. Oxygenates PUFAs to hydroperoxy compounds and then reduces them to corresponding alcohols. Plays a role in the generation of resolution phase interaction products (resolvins) during both sterile and infectious inflammation. Metabolizes docosahexaenoate (DHA, C22:6(n-3)) to 17R-HDHA, a precursor of the D-series resolvins (RvDs). As a component of the biosynthetic pathway of E-series resolvins (RvEs), converts eicosapentaenoate (EPA, C20:5(n-3)) primarily to 18S-HEPE that is further metabolized by ALOX5 and LTA4H to generate 18S-RvE1 and 18S-RvE2. In vascular endothelial cells, converts docosapentaenoate (DPA, C22:5(n-3)) to 13R-HDPA, a precursor for 13-series resolvins (RvTs) shown to activate macrophage phagocytosis during bacterial infection. In activated leukocytes, contributes to oxygenation of hydroxyeicosatetraenoates (HETE) to diHETES (5,15-diHETE and 5,11-diHETE). Can also use linoleate (LA, (9Z,12Z)-octadecadienoate, C18:2(n-6)) as substrate and produce hydroxyoctadecadienoates (HODEs) in a regio- and stereospecific manner, being (9R)-HODE ((9R)-hydroxy-(10E,12Z)-octadecadienoate) and (13S)-HODE ((13S)-hydroxy-(9Z,11E)-octadecadienoate) its major products. During neuroinflammation, plays a role in neuronal secretion of specialized preresolving mediators (SPMs) 15R-lipoxin A4 that regulates phagocytic microglia. In Equus caballus (Horse), this protein is Prostaglandin G/H synthase 2 (PTGS2).